The sequence spans 371 residues: MSRNLYYTGPPKFIIKGIMNSTALPQEIQNLTRARFADWLNAHNIAPYRADQVFKWLFVHRAESFDQMTNISKPVRTLLAESFIIGRLKIARTQQSADGTRKYLFELSDGEHIESVLIPEEDHFTLCVSTQVGCAQGCAFCMTAKKGFVRNLTPAEITGQVLGALKTLAPEERLTNIVLMGMGEPLANYDNVITSLDTICDGDCGLQFSTRRVTLSTSGLVPRMAPLGLATTVNLAVSLNATDNKTRDMLMPINKTYPIEVLLEACRTYPLSNRRKITFEYILMAGVNDSEKDALRLVKLLRSIKAKVNLIPFNEHEGAAFKRPDDAAIERFKQILHDRQYTVMTRQSKGADISAACGQLAADIKKYGQNK.

The Proton acceptor role is filled by E114. The Radical SAM core domain occupies E120–D352. Cysteines 127 and 357 form a disulfide. [4Fe-4S] cluster is bound by residues C134, C138, and C141. S-adenosyl-L-methionine contacts are provided by residues G183–E184, S216, S238–N240, and N314. C357 serves as the catalytic S-methylcysteine intermediate.

This sequence belongs to the radical SAM superfamily. RlmN family. It depends on [4Fe-4S] cluster as a cofactor.

The protein localises to the cytoplasm. It carries out the reaction adenosine(2503) in 23S rRNA + 2 reduced [2Fe-2S]-[ferredoxin] + 2 S-adenosyl-L-methionine = 2-methyladenosine(2503) in 23S rRNA + 5'-deoxyadenosine + L-methionine + 2 oxidized [2Fe-2S]-[ferredoxin] + S-adenosyl-L-homocysteine. The catalysed reaction is adenosine(37) in tRNA + 2 reduced [2Fe-2S]-[ferredoxin] + 2 S-adenosyl-L-methionine = 2-methyladenosine(37) in tRNA + 5'-deoxyadenosine + L-methionine + 2 oxidized [2Fe-2S]-[ferredoxin] + S-adenosyl-L-homocysteine. Its function is as follows. Specifically methylates position 2 of adenine 2503 in 23S rRNA and position 2 of adenine 37 in tRNAs. m2A2503 modification seems to play a crucial role in the proofreading step occurring at the peptidyl transferase center and thus would serve to optimize ribosomal fidelity. The polypeptide is Dual-specificity RNA methyltransferase RlmN (Desulfosudis oleivorans (strain DSM 6200 / JCM 39069 / Hxd3) (Desulfococcus oleovorans)).